Here is a 455-residue protein sequence, read N- to C-terminus: Elongation factor Tu, mitochondrial (455 aa).

The transit peptide at 1-46 (MTTMAAATLLRATPHFSGLAAGRTFLLQGLLRLLKAPALPLLCRGL) directs the protein to the mitochondrion. Residues 58 to 254 (KPHVNVGTIG…AVDTYIPVPA (197 aa)) enclose the tr-type G domain. The tract at residues 67 to 74 (GHVDHGKT) is G1. GTP-binding residues include Asp-70, Gly-72, Lys-73, Thr-74, and Thr-75. Thr-74 contacts Mg(2+). Lys-82 carries the N6-acetyllysine modification. The residue at position 91 (Lys-91) is an N6-acetyllysine; alternate. Position 91 is an N6-succinyllysine; alternate (Lys-91). Residues 108 to 112 (GITIN) form a G2 region. The tract at residues 129 to 132 (DCPG) is G3. Positions 184, 187, 222, 223, and 224 each coordinate GTP. A G4 region spans residues 184–187 (NKAD). The interval 222–224 (SAL) is G5. Lys-237 carries the N6-succinyllysine modification. Lys-259 carries the post-translational modification N6-acetyllysine. Thr-281 carries the post-translational modification Phosphothreonine. Lys-289 is subject to N6-succinyllysine. Ser-315 carries the phosphoserine modification. N6-acetyllysine is present on residues Lys-364 and Lys-421.

Belongs to the TRAFAC class translation factor GTPase superfamily. Classic translation factor GTPase family. EF-Tu/EF-1A subfamily. As to quaternary structure, interacts with NLRX1. Interacts with ATG16L1. In terms of assembly, (Microbial infection) Interacts with human parainfluenza virus 3 matrix protein; this interaction inhibits RLR-mediated type I interferon production while promoting autophagy. (Microbial infection) Interacts with Hantaan hantavirus glycoprotein N; this interaction contributes to the virus-induced degradation of mitochondria by autophagy, which leads to degradation of MAVS and inhibition of type I interferon (IFN) responses.

It localises to the mitochondrion. The enzyme catalyses GTP + H2O = GDP + phosphate + H(+). Its function is as follows. GTP hydrolase that promotes the GTP-dependent binding of aminoacyl-tRNA to the A-site of ribosomes during protein biosynthesis. Also plays a role in the regulation of autophagy and innate immunity. Recruits ATG5-ATG12 and NLRX1 at mitochondria and serves as a checkpoint of the RIGI-MAVS pathway. In turn, inhibits RLR-mediated type I interferon while promoting autophagy. In Homo sapiens (Human), this protein is Elongation factor Tu, mitochondrial (TUFM).